A 249-amino-acid polypeptide reads, in one-letter code: Molybdate/tungstate transport system permease protein WtpB (249 aa).

The Cytoplasmic portion of the chain corresponds to 1–10 (MDRRDYLAYA). The chain crosses the membrane as a helical span at residues 11–31 (FAGLGAFLVAFIGLPLFMIFI). The Extracellular segment spans residues 32–56 (KQAYDLEALQRTLVDPLVIESIRNS). Residues 53-239 (IRNSLFTATV…TISLAVFIFL (187 aa)) enclose the ABC transmembrane type-1 domain. A helical membrane pass occupies residues 57-77 (LFTATVSTLLGILFGVPLGYV). Over 78 to 96 (LARKEFKGKNFVQALIDTP) the chain is Cytoplasmic. The chain crosses the membrane as a helical span at residues 97–117 (IVIPHSVVGIMLLVTFSDAIL). Asp-118 is a topological domain (extracellular). A helical membrane pass occupies residues 119–139 (NYKGIVAVMLFVSSPFIVNSA). Residues 140–179 (RDGFLSVDEKLEYVARTLGASGLRTFFSVTLPNAIHSIAS) lie on the Cytoplasmic side of the membrane. A helical membrane pass occupies residues 180-200 (GAIMAWARAISEVGAILIVAY). At 201–223 (YPKTAQVLIMEYFNNYGLRASRP) the chain is on the extracellular side. The helical transmembrane segment at 224 to 244 (IAVILVTISLAVFIFLRWLVG) threads the bilayer. The Cytoplasmic segment spans residues 245–249 (RGRNA).

It belongs to the binding-protein-dependent transport system permease family. As to quaternary structure, the complex is composed of two ATP-binding proteins (WtpC), two transmembrane proteins (WtpB) and a solute-binding protein (WtpA).

The protein resides in the cell membrane. Functionally, part of the ABC transporter complex WtpABC involved in molybdate/tungstate import. Probably responsible for the translocation of the substrate across the membrane. The protein is Molybdate/tungstate transport system permease protein WtpB of Pyrococcus furiosus (strain ATCC 43587 / DSM 3638 / JCM 8422 / Vc1).